A 200-amino-acid polypeptide reads, in one-letter code: Putative hydrolase MhqD (200 aa).

Active-site charge relay system residues include serine 100, aspartate 150, and histidine 181.

This sequence belongs to the AB hydrolase superfamily. AB hydrolase 2 family.

The protein resides in the cytoplasm. Its function is as follows. Putative hydrolase that may contribute to the degradation of aromatic compounds. The protein is Putative hydrolase MhqD (mhqD) of Bacillus subtilis (strain 168).